The following is a 251-amino-acid chain: Developmental protein SEPALLATA 1 (251 aa).

An MADS-box domain is found at Arg-3–Phe-57. Positions Ala-85–Ile-176 form a coiled coil. The K-box domain maps to Leu-88–Val-178.

As to quaternary structure, heterodimer with AGAMOUS capable of binding to CArG-box sequences. Interacts with AGL16. Interacts with TT16/AGL32. As to expression, expressed mainly in carpels, and weakly in stamens.

The protein resides in the nucleus. Functionally, probable transcription factor. Functions with SEPALLATA2/AGL4 and SEPALLATA3/AGL9 to ensure proper development of petals, stamens and carpels, and to prevent the indeterminate growth of the flower meristem. Forms a heterodimer via the K-box domain with AGAMOUS, that could be involved in genes regulation during floral meristem development. The polypeptide is Developmental protein SEPALLATA 1 (SEP1) (Arabidopsis thaliana (Mouse-ear cress)).